A 95-amino-acid polypeptide reads, in one-letter code: Small ribosomal subunit protein uS19 (95 aa).

Belongs to the universal ribosomal protein uS19 family.

Protein S19 forms a complex with S13 that binds strongly to the 16S ribosomal RNA. In Bdellovibrio bacteriovorus (strain ATCC 15356 / DSM 50701 / NCIMB 9529 / HD100), this protein is Small ribosomal subunit protein uS19.